The following is a 309-amino-acid chain: Aspartate carbamoyltransferase catalytic subunit (309 aa).

Positions 55 and 56 each coordinate carbamoyl phosphate. K85 lines the L-aspartate pocket. R106, H135, and Q138 together coordinate carbamoyl phosphate. L-aspartate-binding residues include R168 and R230. Residues L268 and P269 each coordinate carbamoyl phosphate.

This sequence belongs to the aspartate/ornithine carbamoyltransferase superfamily. ATCase family. Heterododecamer (2C3:3R2) of six catalytic PyrB chains organized as two trimers (C3), and six regulatory PyrI chains organized as three dimers (R2).

It catalyses the reaction carbamoyl phosphate + L-aspartate = N-carbamoyl-L-aspartate + phosphate + H(+). It participates in pyrimidine metabolism; UMP biosynthesis via de novo pathway; (S)-dihydroorotate from bicarbonate: step 2/3. Functionally, catalyzes the condensation of carbamoyl phosphate and aspartate to form carbamoyl aspartate and inorganic phosphate, the committed step in the de novo pyrimidine nucleotide biosynthesis pathway. The polypeptide is Aspartate carbamoyltransferase catalytic subunit (Vibrio vulnificus (strain YJ016)).